A 170-amino-acid polypeptide reads, in one-letter code: uncharacterized protein (170 aa).

This is an uncharacterized protein from Acidianus bottle-shaped virus (isolate Italy/Pozzuoli) (ABV).